The chain runs to 236 residues: Demethylmenaquinone methyltransferase (236 aa).

Residues Thr-62, Asp-80, 107-108 (DA), and Ser-124 contribute to the S-adenosyl-L-methionine site.

This sequence belongs to the class I-like SAM-binding methyltransferase superfamily. MenG/UbiE family.

It carries out the reaction a 2-demethylmenaquinol + S-adenosyl-L-methionine = a menaquinol + S-adenosyl-L-homocysteine + H(+). Its pathway is quinol/quinone metabolism; menaquinone biosynthesis; menaquinol from 1,4-dihydroxy-2-naphthoate: step 2/2. Functionally, methyltransferase required for the conversion of demethylmenaquinol (DMKH2) to menaquinol (MKH2). This is Demethylmenaquinone methyltransferase from Thermobifida fusca (strain YX).